A 274-amino-acid polypeptide reads, in one-letter code: Putative bidirectional sugar transporter SWEET7d (274 aa).

Over 1-8 the chain is Extracellular; the sequence is MVPDLIRN. The helical transmembrane segment at 9–29 threads the bilayer; that stretch reads VVGIVGNVISFGLFLSPVPTF. The region spanning 9–96 is the MtN3/slv 1 domain; the sequence is VVGIVGNVIS…TIFFLFSDKK (88 aa). The Cytoplasmic portion of the chain corresponds to 30 to 45; sequence WRIIKNKDVRDFKADQ. A helical membrane pass occupies residues 46–66; it reads YLATLLNCMLWVFYGLPIVHP. The Extracellular segment spans residues 67 to 68; that stretch reads NS. The chain crosses the membrane as a helical span at residues 69-89; it reads ILVVTINGIGLVIEAVYLTIF. The Cytoplasmic portion of the chain corresponds to 90–100; the sequence is FLFSDKKNKKK. The helical transmembrane segment at 101-121 threads the bilayer; sequence MGVVLATEALFMAAVALGVLL. Topologically, residues 122-130 are extracellular; sequence DAHTHQRRS. Residues 131–151 traverse the membrane as a helical segment; it reads LIVGILCVIFGTIMYSSPLTI. Positions 132–214 constitute a MtN3/slv 2 domain; it reads IVGILCVIFG…QLILYAIYYR (83 aa). The Cytoplasmic segment spans residues 152-164; it reads MSQVVKTKSVEYM. Residues 165–185 form a helical membrane-spanning segment; that stretch reads PLLLSVVSFLNGLCWTSYALI. At 186 to 188 the chain is on the extracellular side; the sequence is RFD. A helical membrane pass occupies residues 189–209; sequence IFITIPNGLGVLFALMQLILY. Topologically, residues 210-274 are cytoplasmic; it reads AIYYRTTPKK…SISRLSHKLA (65 aa). Residues 218 to 274 form a disordered region; that stretch reads KKPSTTGPHPRSRIRTSSYQPSPPSPRAPASSPLSARTTTSMAAMSPSISRLSHKLA. Positions 245–258 are enriched in low complexity; that stretch reads APASSPLSARTTTS.

Belongs to the SWEET sugar transporter family. Forms homooligomers and/or heterooligomers.

The protein resides in the cell membrane. Mediates both low-affinity uptake and efflux of sugar across the plasma membrane. This is Putative bidirectional sugar transporter SWEET7d (SWEET7D) from Oryza sativa subsp. japonica (Rice).